The chain runs to 220 residues: Deoxyribose-phosphate aldolase (220 aa).

Catalysis depends on D89, which acts as the Proton donor/acceptor. The Schiff-base intermediate with acetaldehyde role is filled by K151. K180 acts as the Proton donor/acceptor in catalysis.

It belongs to the DeoC/FbaB aldolase family. DeoC type 1 subfamily. In terms of assembly, homotetramer, in solution and in the crystal structure.

The protein resides in the cytoplasm. The catalysed reaction is 2-deoxy-D-ribose 5-phosphate = D-glyceraldehyde 3-phosphate + acetaldehyde. The protein operates within carbohydrate degradation; 2-deoxy-D-ribose 1-phosphate degradation; D-glyceraldehyde 3-phosphate and acetaldehyde from 2-deoxy-alpha-D-ribose 1-phosphate: step 2/2. Functionally, catalyzes a reversible aldol reaction between acetaldehyde and D-glyceraldehyde 3-phosphate to generate 2-deoxy-D-ribose 5-phosphate. The protein is Deoxyribose-phosphate aldolase of Thermus thermophilus (strain ATCC 27634 / DSM 579 / HB8).